The primary structure comprises 367 residues: 2-aminoethylphosphonate--pyruvate transaminase (367 aa).

At K194 the chain carries N6-(pyridoxal phosphate)lysine.

Belongs to the class-V pyridoxal-phosphate-dependent aminotransferase family. PhnW subfamily. In terms of assembly, homodimer. The cofactor is pyridoxal 5'-phosphate.

It catalyses the reaction (2-aminoethyl)phosphonate + pyruvate = phosphonoacetaldehyde + L-alanine. Its function is as follows. Involved in phosphonate degradation. The protein is 2-aminoethylphosphonate--pyruvate transaminase of Salmonella gallinarum (strain 287/91 / NCTC 13346).